The primary structure comprises 66 residues: Large ribosomal subunit protein bL31 (66 aa).

4 residues coordinate Zn(2+): Cys-16, Cys-18, Cys-36, and Cys-39.

Belongs to the bacterial ribosomal protein bL31 family. Type A subfamily. In terms of assembly, part of the 50S ribosomal subunit. Zn(2+) is required as a cofactor.

Its function is as follows. Binds the 23S rRNA. The sequence is that of Large ribosomal subunit protein bL31 from Campylobacter fetus subsp. fetus (strain 82-40).